The sequence spans 444 residues: Methylenetetrahydrofolate--tRNA-(uracil-5-)-methyltransferase TrmFO (444 aa).

10-15 (GAGLAG) is an FAD binding site.

It belongs to the MnmG family. TrmFO subfamily. The cofactor is FAD.

The protein localises to the cytoplasm. The enzyme catalyses uridine(54) in tRNA + (6R)-5,10-methylene-5,6,7,8-tetrahydrofolate + NADH + H(+) = 5-methyluridine(54) in tRNA + (6S)-5,6,7,8-tetrahydrofolate + NAD(+). The catalysed reaction is uridine(54) in tRNA + (6R)-5,10-methylene-5,6,7,8-tetrahydrofolate + NADPH + H(+) = 5-methyluridine(54) in tRNA + (6S)-5,6,7,8-tetrahydrofolate + NADP(+). Catalyzes the folate-dependent formation of 5-methyl-uridine at position 54 (M-5-U54) in all tRNAs. This chain is Methylenetetrahydrofolate--tRNA-(uracil-5-)-methyltransferase TrmFO, found in Streptococcus equi subsp. zooepidemicus (strain H70).